The sequence spans 466 residues: 23S rRNA (uracil(1939)-C(5))-methyltransferase RlmD (466 aa).

Residues 1 to 54 (MVDVLNIESLDLEARGIAHRDGKVLFVEGALPGERVTVQTVRRKPSYEIAKVEE) form the TRAM domain. Residues Cys67, Cys73, Cys76, and Cys155 each coordinate [4Fe-4S] cluster. Residues Gln264, Phe293, Asn298, Glu314, Asn342, and Asp363 each contribute to the S-adenosyl-L-methionine site. Residue Cys393 is the Nucleophile of the active site.

It belongs to the class I-like SAM-binding methyltransferase superfamily. RNA M5U methyltransferase family. RlmD subfamily.

It catalyses the reaction uridine(1939) in 23S rRNA + S-adenosyl-L-methionine = 5-methyluridine(1939) in 23S rRNA + S-adenosyl-L-homocysteine + H(+). In terms of biological role, catalyzes the formation of 5-methyl-uridine at position 1939 (m5U1939) in 23S rRNA. The sequence is that of 23S rRNA (uracil(1939)-C(5))-methyltransferase RlmD from Bordetella bronchiseptica (strain ATCC BAA-588 / NCTC 13252 / RB50) (Alcaligenes bronchisepticus).